Consider the following 337-residue polypeptide: Adenosine deaminase (337 aa).

Zn(2+) contacts are provided by H15 and H17. Substrate is bound by residues H17, D19, and G172. H199 serves as a coordination point for Zn(2+). E202 acts as the Proton donor in catalysis. D279 provides a ligand contact to Zn(2+).

This sequence belongs to the metallo-dependent hydrolases superfamily. Adenosine and AMP deaminases family. Adenosine deaminase subfamily. Requires Zn(2+) as cofactor.

It catalyses the reaction adenosine + H2O + H(+) = inosine + NH4(+). It carries out the reaction 2'-deoxyadenosine + H2O + H(+) = 2'-deoxyinosine + NH4(+). Functionally, catalyzes the hydrolytic deamination of adenosine and 2-deoxyadenosine. The protein is Adenosine deaminase of Enterococcus faecalis (strain ATCC 700802 / V583).